Consider the following 621-residue polypeptide: Glutamyl-tRNA(Gln) amidotransferase subunit B, mitochondrial (621 aa).

The N-terminal 41 residues, 1 to 41 (MARLPTTELRKYLLTGQFTRRGCLHLRPSPLAPPIPPLRTL), are a transit peptide targeting the mitochondrion. Disordered regions lie at residues 26–86 (LRPS…DNQT) and 106–136 (SKLFSPASTPSSSSDDAVHHHHPNTHVAPFD). 2 stretches are compositionally biased toward low complexity: residues 38 to 57 (LRTLSTTPPTPSDQQPQIIP) and 110 to 120 (SPASTPSSSSD).

The protein belongs to the GatB/GatE family. GatB subfamily. Subunit of the heterotrimeric GatCAB amidotransferase (AdT) complex, composed of A, B and C subunits.

Its subcellular location is the mitochondrion. It catalyses the reaction L-glutamyl-tRNA(Gln) + L-glutamine + ATP + H2O = L-glutaminyl-tRNA(Gln) + L-glutamate + ADP + phosphate + H(+). Allows the formation of correctly charged Gln-tRNA(Gln) through the transamidation of misacylated Glu-tRNA(Gln) in the mitochondria. The reaction takes place in the presence of glutamine and ATP through an activated gamma-phospho-Glu-tRNA(Gln). The protein is Glutamyl-tRNA(Gln) amidotransferase subunit B, mitochondrial of Podospora anserina (strain S / ATCC MYA-4624 / DSM 980 / FGSC 10383) (Pleurage anserina).